A 435-amino-acid polypeptide reads, in one-letter code: Methanethiol oxidase (435 aa).

A signal peptide spans 1–24; sequence MKKHLLAGACALAMGFAVIPGTFA.

Belongs to the selenium-binding protein family. As to quaternary structure, homotetramer. Cu cation is required as a cofactor.

The protein resides in the periplasm. The catalysed reaction is methanethiol + O2 + H2O = hydrogen sulfide + formaldehyde + H2O2 + H(+). It participates in organosulfur degradation. With respect to regulation, inhibited by EDTA but not by EGTA. Functionally, catalyzes the oxidation of methanethiol. Can also degrade ethanethiol, but not methanol, methylamine or dimethylsulfide. The chain is Methanethiol oxidase from Hyphomicrobium sp.